The following is a 145-amino-acid chain: Extracellular globin-2 (145 aa).

A Globin domain is found at 3–145 (QCGVLEGLKV…HIEDGIKGHH (143 aa)). A disulfide bridge connects residues Cys4 and Cys133. His96 provides a ligand contact to heme b.

The protein belongs to the globin family. In terms of assembly, the extracellular hemoglobin of the earthworm consists of 12 subunits that have a hexagonal bilayer structure with a molecular weight near 3.8 million. Each one-twelfth subunit is composed primarily of disulfide linked trimers (chains A, B, and C) and monomers (chain D).

This is Extracellular globin-2 from Lumbricus terrestris (Common earthworm).